We begin with the raw amino-acid sequence, 161 residues long: Epithelial membrane protein 2 (161 aa).

4 consecutive transmembrane segments (helical) span residues 1–21 (MLVI…LLFI), 67–87 (TMIL…LQLF), 95–115 (FVFT…GASI), and 137–157 (FVVA…YLVL).

The protein belongs to the PMP-22/EMP/MP20 family. In terms of tissue distribution, expressed in the arches, orbits, pectoral fins, vessels, pronephric renal tubules, and glomeruli.

It is found in the golgi apparatus membrane. Its subcellular location is the cell membrane. It localises to the apical cell membrane. The protein resides in the membrane raft. The protein localises to the cytoplasm. It is found in the nucleus. Its subcellular location is the perinuclear region. Functionally, functions as a key regulator of cell membrane composition by regulating protein surface expression. Also, plays a role in regulation of processes including cell migration, cell proliferation, cell contraction and cell adhesion. May play a role in glomerular filtration. The sequence is that of Epithelial membrane protein 2 (emp2) from Danio rerio (Zebrafish).